Reading from the N-terminus, the 271-residue chain is Aquaporin-2 (271 aa).

At 1–11 (MWELRSIAFSR) the chain is on the cytoplasmic side. Residues 12-32 (AVFAEFLATLLFVFFGLGSAL) form a helical membrane-spanning segment. At 33 to 40 (NWPQALPS) the chain is on the extracellular side. A helical membrane pass occupies residues 41 to 59 (VLQIAMAFGLGIGTLVQAL). At 60-64 (GHISG) the chain is on the cytoplasmic side. The segment at residues 65–74 (AHINPAVTVA) is an intramembrane region (discontinuously helical). Residues 68–70 (NPA) carry the NPA 1 motif. The Cytoplasmic portion of the chain corresponds to 75-85 (CLVGCHVSVLR). Residues 86–107 (AAFYVAAQLLGAVAGAALLHEI) form a helical membrane-spanning segment. Topologically, residues 108–127 (TPADIRGDLAVNALSNSTTA) are extracellular. The N-linked (GlcNAc...) asparagine glycan is linked to asparagine 123. A helical membrane pass occupies residues 128–148 (GQAVTVELFLTLQLVLCIFAS). Residues 149 to 156 (TDERRGEN) lie on the Cytoplasmic side of the membrane. A helical transmembrane segment spans residues 157 to 176 (PGTPALSIGFSVALGHLLGI). Topologically, residues 177–180 (HYTG) are extracellular. Positions 181–193 (CSMNPARSLAPAV) form an intramembrane region, discontinuously helical. The NPA 2 signature appears at 184-186 (NPA). The Extracellular portion of the chain corresponds to 194-201 (VTGKFDDH). Residues 202 to 222 (WVFWIGPLVGAILGSLLYNYV) form a helical membrane-spanning segment. The Cytoplasmic segment spans residues 223 to 271 (LFPPAKSLSERLAVLKGLEPDTDWEEREVRRRQSVELHSPQSLPRGTKA). A disordered region spans residues 248–271 (EREVRRRQSVELHSPQSLPRGTKA). Position 256 is a phosphoserine; by PKA (serine 256). Residues 261 to 271 (SPQSLPRGTKA) show a composition bias toward polar residues.

This sequence belongs to the MIP/aquaporin (TC 1.A.8) family. In terms of assembly, homotetramer. Interacts with micropeptide MIAC; the interaction leads to a reduction of filamentous actin fibers and inhibition of the EREG/EGFR signaling pathway. Post-translationally, ser-256 phosphorylation is necessary and sufficient for expression at the apical membrane. Endocytosis is not phosphorylation-dependent. N-glycosylated. In terms of tissue distribution, expressed in collecting tubules in kidney medulla (at protein level). Detected in kidney.

The protein localises to the apical cell membrane. It is found in the basolateral cell membrane. The protein resides in the cell membrane. It localises to the cytoplasmic vesicle membrane. Its subcellular location is the golgi apparatus. The protein localises to the trans-Golgi network membrane. The catalysed reaction is H2O(in) = H2O(out). The enzyme catalyses glycerol(in) = glycerol(out). Functionally, forms a water-specific channel that provides the plasma membranes of renal collecting duct with high permeability to water, thereby permitting water to move in the direction of an osmotic gradient. Plays an essential role in renal water homeostasis. Could also be permeable to glycerol. This chain is Aquaporin-2, found in Homo sapiens (Human).